The sequence spans 269 residues: MFSDKMILIAGPCVIEEEETTLEIASRIQELVTPYADRIHWIFKSSYDKANRSSINSYRGPGLNEGLRILSKVKDTLGVEILTDVHSPEEARAAAKVCDILQIPAFLCRQTDLLVAAAETNAVINIKKGQFLSPWDMQGPVDKVLSTGNNKIILTERGCSFGYNNLVSDMRSIPVLSGMGFPVVFDGTHSVQLPGGLKTHSGGQTEFIPTLTRAALAAGAHGLFIETHANPAIAKSDAASMLSLKTFEALLPLWDQLYTCVRSFEMASV.

Belongs to the KdsA family.

The protein localises to the cytoplasm. It catalyses the reaction D-arabinose 5-phosphate + phosphoenolpyruvate + H2O = 3-deoxy-alpha-D-manno-2-octulosonate-8-phosphate + phosphate. It participates in carbohydrate biosynthesis; 3-deoxy-D-manno-octulosonate biosynthesis; 3-deoxy-D-manno-octulosonate from D-ribulose 5-phosphate: step 2/3. Its pathway is bacterial outer membrane biogenesis; lipopolysaccharide biosynthesis. The protein is 2-dehydro-3-deoxyphosphooctonate aldolase of Chlamydia caviae (strain ATCC VR-813 / DSM 19441 / 03DC25 / GPIC) (Chlamydophila caviae).